A 318-amino-acid chain; its full sequence is MSLNFLDFEKPIADLEAKIEGLRLVNQGGEFDISIEEEITKLREKSAEMSKKIFADLGAWQVSQLARHPMRPYTLDYIPRIFSEFDELAGDRAFADDKAIIGGLAMLDEQPIMVIGHQKGRDTKEKIKRNFGMPKPEGYRKALRLMEMAERFNLPIITFIDTPGAYPGVGAEERGQSEAIARNLKVMAGLKVPIICTVIGEGGSGGALAIGVGDRVNMLQYSTYSVISPEGCASILWKSADKAPLAAEAMGVAAGQIKELGLINSIVEEPLGGAHRDHDVAAANLKATIKQQLAQLKSLSVEELLDQRYERLMSFGYC.

In terms of domain architecture, CoA carboxyltransferase C-terminal spans 34–295; sequence SIEEEITKLR…KATIKQQLAQ (262 aa).

It belongs to the AccA family. Acetyl-CoA carboxylase is a heterohexamer composed of biotin carboxyl carrier protein (AccB), biotin carboxylase (AccC) and two subunits each of ACCase subunit alpha (AccA) and ACCase subunit beta (AccD).

Its subcellular location is the cytoplasm. It catalyses the reaction N(6)-carboxybiotinyl-L-lysyl-[protein] + acetyl-CoA = N(6)-biotinyl-L-lysyl-[protein] + malonyl-CoA. It participates in lipid metabolism; malonyl-CoA biosynthesis; malonyl-CoA from acetyl-CoA: step 1/1. Component of the acetyl coenzyme A carboxylase (ACC) complex. First, biotin carboxylase catalyzes the carboxylation of biotin on its carrier protein (BCCP) and then the CO(2) group is transferred by the carboxyltransferase to acetyl-CoA to form malonyl-CoA. This Pseudoalteromonas atlantica (strain T6c / ATCC BAA-1087) protein is Acetyl-coenzyme A carboxylase carboxyl transferase subunit alpha.